The sequence spans 754 residues: MGIKVQRPRCFFDIAINNQPAGRVVFELFSDVCPKTCENFRCLCTGEKGTGKSTQKPLHYKSCLFHRVVKDFMVQGGDFSEGNGRGGESIYGGFFEDESFAVKHNKEFLLSMANRGKDTNGSQFFITTKPTPHLDGHHVVFGQVISGQEVVREIENQKTDAASKPFAEVRILSCGELIPKSKVKKEEKKRHKSSSSSSSSSSDSDSSSDSQSSSDSSDSESATEEKSKKRKKKHRKNSRKHKKEKKKRKKSKKSASSESEAENLEAQPQSTVRPEEIPPIPENRFLMRKSPPKADEKERKNRERERERECNPPNSQPASYQRRLLVTRSGRKIKGRGPRRYRTPSRSRSRDRFRRSETPPHWRQEMQRAQRMRVSSGERWIKGDKSELNEIKENQRSPVRVKERKITDHRNVSESPNRKNEKEKKVKDHKSNSKERDIRRNSEKDDKYKNKVKKRAKSKSRSKSKEKSKSKERDSKHNRNEEKRMRSRSKGRDHENVKEKEKQSDSKGKDQERSRSKEKSKQLESKSNEHDHSKSKEKDRRAQSRSRECDITKGKHSYNSRTRERSRSRDRSRRVRSRTHDRDRSRSKEYHRYREQEYRRRGRSRSRERRTPPGRSRSKDRRRRRRDSRSSEREESQSRNKDKYRNQESKSSHRKENSESEKRMYSKSRDHNSSNNSREKKADRDQSPFSKIKQSSQDNELKSSMLKNKEDEKIRSSVEKENQKSKGQENDHVHEKNKKFDHESSPGTDEDKSG.

In terms of domain architecture, PPIase cyclophilin-type spans 11 to 176; the sequence is FFDIAINNQP…AEVRILSCGE (166 aa). A compositionally biased stretch (basic residues) spans 182–193; sequence KVKKEEKKRHKS. The tract at residues 182–754 is disordered; sequence KVKKEEKKRH…SPGTDEDKSG (573 aa). Low complexity predominate over residues 194 to 216; that stretch reads SSSSSSSSSDSDSSSDSQSSSDS. The segment covering 228 to 253 has biased composition (basic residues); that stretch reads KKRKKKHRKNSRKHKKEKKKRKKSKK. Ser-254, Ser-256, Ser-257, Ser-259, and Ser-290 each carry phosphoserine. A compositionally biased stretch (basic and acidic residues) spans 292-310; that stretch reads PKADEKERKNREREREREC. At Ser-315 the chain carries Phosphoserine. A compositionally biased stretch (basic residues) spans 329–347; it reads SGRKIKGRGPRRYRTPSRS. Basic and acidic residues-rich tracts occupy residues 348 to 368 and 379 to 449; these read RSRDRFRRSETPPHWRQEMQR and RWIK…DKYK. Position 356 is a phosphoserine (Ser-356). The residue at position 358 (Thr-358) is a Phosphothreonine. Phosphoserine is present on Ser-386. A Glycyl lysine isopeptide (Lys-Gly) (interchain with G-Cter in SUMO2) cross-link involves residue Lys-392. Residues Ser-397, Ser-413, and Ser-415 each carry the phosphoserine modification. Basic residues predominate over residues 450–462; the sequence is NKVKKRAKSKSRS. Composition is skewed to basic and acidic residues over residues 463–553 and 578–599; these read KSKE…DITK and RTHDRDRSRSKEYHRYREQEYR. A compositionally biased stretch (basic residues) spans 616-627; it reads SRSKDRRRRRRD. Over residues 628 to 686 the composition is skewed to basic and acidic residues; the sequence is SRSSEREESQSRNKDKYRNQESKSSHRKENSESEKRMYSKSRDHNSSNNSREKKADRDQ. Phosphoserine is present on residues Ser-687 and Ser-690. Over residues 687–698 the composition is skewed to polar residues; the sequence is SPFSKIKQSSQD. Lys-693 participates in a covalent cross-link: Glycyl lysine isopeptide (Lys-Gly) (interchain with G-Cter in SUMO2). Phosphoserine occurs at positions 696, 744, and 745. The segment covering 707-754 has biased composition (basic and acidic residues); that stretch reads KNKEDEKIRSSVEKENQKSKGQENDHVHEKNKKFDHESSPGTDEDKSG. Phosphothreonine is present on Thr-748. At Ser-753 the chain carries Phosphoserine.

In terms of assembly, interacts with CLK1, PNN and with the phosphorylated C-terminal domain of RNA polymerase II. Ubiquitous.

It localises to the nucleus matrix. The protein resides in the nucleus speckle. It catalyses the reaction [protein]-peptidylproline (omega=180) = [protein]-peptidylproline (omega=0). Its activity is regulated as follows. Inhibited by cyclosporin A (CsA). Functionally, PPIase that catalyzes the cis-trans isomerization of proline imidic peptide bonds in oligopeptides and may therefore assist protein folding. May be implicated in the folding, transport, and assembly of proteins. May play an important role in the regulation of pre-mRNA splicing. The polypeptide is Peptidyl-prolyl cis-trans isomerase G (PPIG) (Homo sapiens (Human)).